Consider the following 177-residue polypeptide: Peptide deformylase (177 aa).

Fe cation is bound by residues Cys98 and His140. Residue Glu141 is part of the active site. His144 contributes to the Fe cation binding site.

Belongs to the polypeptide deformylase family. It depends on Fe(2+) as a cofactor.

It catalyses the reaction N-terminal N-formyl-L-methionyl-[peptide] + H2O = N-terminal L-methionyl-[peptide] + formate. Its function is as follows. Removes the formyl group from the N-terminal Met of newly synthesized proteins. Requires at least a dipeptide for an efficient rate of reaction. N-terminal L-methionine is a prerequisite for activity but the enzyme has broad specificity at other positions. In Zymomonas mobilis subsp. mobilis (strain ATCC 31821 / ZM4 / CP4), this protein is Peptide deformylase.